A 119-amino-acid chain; its full sequence is Large ribosomal subunit protein uL18 (119 aa).

It belongs to the universal ribosomal protein uL18 family. In terms of assembly, part of the 50S ribosomal subunit; part of the 5S rRNA/L5/L18/L25 subcomplex. Contacts the 5S and 23S rRNAs.

Its function is as follows. This is one of the proteins that bind and probably mediate the attachment of the 5S RNA into the large ribosomal subunit, where it forms part of the central protuberance. The sequence is that of Large ribosomal subunit protein uL18 from Xanthomonas axonopodis pv. citri (strain 306).